A 60-amino-acid polypeptide reads, in one-letter code: Metallothionein A (60 aa).

Residues 1–28 form a beta region; that stretch reads MDPCECSKTGKCNCGTSCTCTNCSCKCC. A divalent metal cation contacts are provided by cysteine 4, cysteine 6, cysteine 12, cysteine 14, cysteine 18, cysteine 20, cysteine 23, cysteine 25, cysteine 28, cysteine 32, cysteine 33, cysteine 35, cysteine 36, cysteine 40, cysteine 43, cysteine 47, cysteine 49, cysteine 54, cysteine 58, and cysteine 59. Positions 29–60 are alpha; sequence KKSCCSCCPSGCSKCASGCVCKGNSCDKSCCQ.

This sequence belongs to the metallothionein superfamily. Type 1 family.

Its function is as follows. Metallothioneins have a high content of cysteine residues that bind various heavy metals. In Cyprinodon sp. (Pupfish), this protein is Metallothionein A (mta).